The chain runs to 317 residues: Aspartate carbamoyltransferase catalytic subunit (317 aa).

The carbamoyl phosphate site is built by Arg-64 and Thr-65. Residue Lys-92 participates in L-aspartate binding. Arg-114, His-142, and Gln-145 together coordinate carbamoyl phosphate. L-aspartate contacts are provided by Arg-176 and Arg-230. Gly-271 and Pro-272 together coordinate carbamoyl phosphate.

The protein belongs to the aspartate/ornithine carbamoyltransferase superfamily. ATCase family. In terms of assembly, heterododecamer (2C3:3R2) of six catalytic PyrB chains organized as two trimers (C3), and six regulatory PyrI chains organized as three dimers (R2).

It carries out the reaction carbamoyl phosphate + L-aspartate = N-carbamoyl-L-aspartate + phosphate + H(+). Its pathway is pyrimidine metabolism; UMP biosynthesis via de novo pathway; (S)-dihydroorotate from bicarbonate: step 2/3. Its function is as follows. Catalyzes the condensation of carbamoyl phosphate and aspartate to form carbamoyl aspartate and inorganic phosphate, the committed step in the de novo pyrimidine nucleotide biosynthesis pathway. This Nitratidesulfovibrio vulgaris (strain DP4) (Desulfovibrio vulgaris) protein is Aspartate carbamoyltransferase catalytic subunit.